A 588-amino-acid polypeptide reads, in one-letter code: Protein kinase C iota type (588 aa).

Positions 18-101 (QVRVKAYYRG…SELIIHVFPC (84 aa)) constitute a PB1 domain. A Phorbol-ester/DAG-type zinc finger spans residues 133 to 183 (GHAFQAKRFNRRAHCAICTDRIWGLGRQGYKCINCKLLVHKKCHKLVTVEC). Residues 194 to 213 (GRIDPGSTHPEHPDQVLGKK) are disordered. The region spanning 246 to 514 (FDLLRVIGRG…FADIMAHPFF (269 aa)) is the Protein kinase domain. Residues 252-260 (IGRGSYAKV) and lysine 275 each bind ATP. The Proton acceptor role is filled by aspartate 370. Threonine 404 and threonine 556 each carry phosphothreonine. An AGC-kinase C-terminal domain is found at 515–586 (RNVDWDLMEQ…INPLLMSAEE (72 aa)).

The protein belongs to the protein kinase superfamily. AGC Ser/Thr protein kinase family. PKC subfamily.

It catalyses the reaction L-seryl-[protein] + ATP = O-phospho-L-seryl-[protein] + ADP + H(+). The catalysed reaction is L-threonyl-[protein] + ATP = O-phospho-L-threonyl-[protein] + ADP + H(+). With respect to regulation, exhibits an elevated basal enzymatic activity and is not regulated by diacylglycerol, phosphatidylserine, phorbol esters or calcium ions. Two specific sites, Thr-404 (activation loop of the kinase domain) and Thr-556 (turn motif), need to be phosphorylated for its full activation. Its function is as follows. Calcium- and diacylglycerol-independent serine/ threonine-protein kinase that plays a general protective role against apoptotic stimuli, is involved in NF-kappa-B activation, cell survival, differentiation and polarity, and contributes to the regulation of microtubule dynamics in the early secretory pathway. Is required for the formation and maintenance of the zonula adherens during early epithelial development and plays a critical role in organ morphogenesis and in regulating the orientation of cell division. Required for polarized epithelial organization, myocardium coherence and cell connectivity in the early somite stages. Required for heart cone tilt and development of circulatory architecture during embryogenesis. In Danio rerio (Zebrafish), this protein is Protein kinase C iota type (prkci).